The following is a 246-amino-acid chain: UPF0736 protein GWCH70_0753 (246 aa).

This sequence belongs to the UPF0736 family.

This Geobacillus sp. (strain WCH70) protein is UPF0736 protein GWCH70_0753.